The primary structure comprises 145 residues: UPF0310 protein PH1033 (145 aa).

This sequence belongs to the UPF0310 family.

The polypeptide is UPF0310 protein PH1033 (Pyrococcus horikoshii (strain ATCC 700860 / DSM 12428 / JCM 9974 / NBRC 100139 / OT-3)).